We begin with the raw amino-acid sequence, 64 residues long: Prokaryotic ubiquitin-like protein Pup (64 aa).

The tract at residues 1-37 is disordered; sequence MAQEQTKRGGGGGEDDDLTGSTAAGQERREKLTDETD. The segment at 21–58 is ARC ATPase binding; it reads STAAGQERREKLTDETDDLLDEIDDVLEENAEDFVRAY. Residues 23–52 adopt a coiled-coil conformation; that stretch reads AAGQERREKLTDETDDLLDEIDDVLEENAE. Gln-64 carries the deamidated glutamine modification. Gln-64 participates in a covalent cross-link: Isoglutamyl lysine isopeptide (Gln-Lys) (interchain with K-? in acceptor proteins).

It belongs to the prokaryotic ubiquitin-like protein family. Strongly interacts with the proteasome-associated ATPase ARC through a hydrophobic interface; the interacting region of Pup lies in its C-terminal half. There is one Pup binding site per ARC hexamer ring. Post-translationally, is modified by deamidation of its C-terminal glutamine to glutamate by the deamidase Dop, a prerequisite to the subsequent pupylation process.

It participates in protein degradation; proteasomal Pup-dependent pathway. Its function is as follows. Protein modifier that is covalently attached to lysine residues of substrate proteins, thereby targeting them for proteasomal degradation. The tagging system is termed pupylation. The sequence is that of Prokaryotic ubiquitin-like protein Pup from Mycolicibacterium vanbaalenii (strain DSM 7251 / JCM 13017 / BCRC 16820 / KCTC 9966 / NRRL B-24157 / PYR-1) (Mycobacterium vanbaalenii).